The following is a 217-amino-acid chain: Protein GrpE (217 aa).

3 stretches are compositionally biased toward acidic residues: residues 1–28 (MSDD…EGDD), 136–152 (DILD…DPGT), and 204–217 (SEAE…DGDE). 3 disordered regions span residues 1–44 (MSDD…NDPA), 135–157 (DDIL…TDPK), and 193–217 (QVTV…DGDE).

The protein belongs to the GrpE family. Homodimer.

It is found in the cytoplasm. Its function is as follows. Participates actively in the response to hyperosmotic and heat shock by preventing the aggregation of stress-denatured proteins, in association with DnaK and GrpE. It is the nucleotide exchange factor for DnaK and may function as a thermosensor. Unfolded proteins bind initially to DnaJ; upon interaction with the DnaJ-bound protein, DnaK hydrolyzes its bound ATP, resulting in the formation of a stable complex. GrpE releases ADP from DnaK; ATP binding to DnaK triggers the release of the substrate protein, thus completing the reaction cycle. Several rounds of ATP-dependent interactions between DnaJ, DnaK and GrpE are required for fully efficient folding. This chain is Protein GrpE, found in Natronomonas pharaonis (strain ATCC 35678 / DSM 2160 / CIP 103997 / JCM 8858 / NBRC 14720 / NCIMB 2260 / Gabara) (Halobacterium pharaonis).